The following is a 168-amino-acid chain: SPbeta prophage-derived uncharacterized protein YomW (168 aa).

The polypeptide is SPbeta prophage-derived uncharacterized protein YomW (yomW) (Bacillus subtilis (strain 168)).